A 313-amino-acid chain; its full sequence is Carbamate kinase 2 (313 aa).

Belongs to the carbamate kinase family.

It localises to the cytoplasm. It catalyses the reaction hydrogencarbonate + NH4(+) + ATP = carbamoyl phosphate + ADP + H2O + H(+). The protein operates within metabolic intermediate metabolism; carbamoyl phosphate degradation; CO(2) and NH(3) from carbamoyl phosphate: step 1/1. This Staphylococcus aureus (strain bovine RF122 / ET3-1) protein is Carbamate kinase 2 (arcC2).